Consider the following 132-residue polypeptide: Small ribosomal subunit protein uS11 (132 aa).

Over residues 1–16 (MAAGMKGKRSRRRKER) the composition is skewed to basic residues. Residues 1 to 20 (MAAGMKGKRSRRRKERKNVE) are disordered.

It belongs to the universal ribosomal protein uS11 family. In terms of assembly, part of the 30S ribosomal subunit. Interacts with proteins S7 and S18. Binds to IF-3.

Functionally, located on the platform of the 30S subunit, it bridges several disparate RNA helices of the 16S rRNA. Forms part of the Shine-Dalgarno cleft in the 70S ribosome. The protein is Small ribosomal subunit protein uS11 of Clostridium botulinum (strain Hall / ATCC 3502 / NCTC 13319 / Type A).